Consider the following 458-residue polypeptide: Bifunctional protein GlmU (458 aa).

Residues 1 to 230 form a pyrophosphorylase region; it reads MHKRTAVVLA…EREILGINSR (230 aa). UDP-N-acetyl-alpha-D-glucosamine contacts are provided by residues 9-12, K23, Q73, and 78-79; these read LAAG and GT. D103 provides a ligand contact to Mg(2+). The UDP-N-acetyl-alpha-D-glucosamine site is built by G140, E155, N170, and N228. N228 is a Mg(2+) binding site. The interval 231 to 251 is linker; that stretch reads VQLAEAEAVLQDRLRRKWMDA. The segment at 252 to 458 is N-acetyltransferase; it reads GVTLIDPPSV…FLGRKHKGSQ (207 aa). R333 and K351 together coordinate UDP-N-acetyl-alpha-D-glucosamine. The Proton acceptor role is filled by H363. UDP-N-acetyl-alpha-D-glucosamine contacts are provided by Y366 and N377. Acetyl-CoA is bound by residues A380, 386-387, S405, A423, and R440; that span reads NY.

This sequence in the N-terminal section; belongs to the N-acetylglucosamine-1-phosphate uridyltransferase family. In the C-terminal section; belongs to the transferase hexapeptide repeat family. As to quaternary structure, homotrimer. It depends on Mg(2+) as a cofactor.

The protein resides in the cytoplasm. The catalysed reaction is alpha-D-glucosamine 1-phosphate + acetyl-CoA = N-acetyl-alpha-D-glucosamine 1-phosphate + CoA + H(+). The enzyme catalyses N-acetyl-alpha-D-glucosamine 1-phosphate + UTP + H(+) = UDP-N-acetyl-alpha-D-glucosamine + diphosphate. It participates in nucleotide-sugar biosynthesis; UDP-N-acetyl-alpha-D-glucosamine biosynthesis; N-acetyl-alpha-D-glucosamine 1-phosphate from alpha-D-glucosamine 6-phosphate (route II): step 2/2. The protein operates within nucleotide-sugar biosynthesis; UDP-N-acetyl-alpha-D-glucosamine biosynthesis; UDP-N-acetyl-alpha-D-glucosamine from N-acetyl-alpha-D-glucosamine 1-phosphate: step 1/1. Its pathway is bacterial outer membrane biogenesis; LPS lipid A biosynthesis. In terms of biological role, catalyzes the last two sequential reactions in the de novo biosynthetic pathway for UDP-N-acetylglucosamine (UDP-GlcNAc). The C-terminal domain catalyzes the transfer of acetyl group from acetyl coenzyme A to glucosamine-1-phosphate (GlcN-1-P) to produce N-acetylglucosamine-1-phosphate (GlcNAc-1-P), which is converted into UDP-GlcNAc by the transfer of uridine 5-monophosphate (from uridine 5-triphosphate), a reaction catalyzed by the N-terminal domain. This is Bifunctional protein GlmU from Heliobacterium modesticaldum (strain ATCC 51547 / Ice1).